The following is a 211-amino-acid chain: ATP phosphoribosyltransferase (211 aa).

Belongs to the ATP phosphoribosyltransferase family. Short subfamily. In terms of assembly, heteromultimer composed of HisG and HisZ subunits.

The protein localises to the cytoplasm. It catalyses the reaction 1-(5-phospho-beta-D-ribosyl)-ATP + diphosphate = 5-phospho-alpha-D-ribose 1-diphosphate + ATP. It functions in the pathway amino-acid biosynthesis; L-histidine biosynthesis; L-histidine from 5-phospho-alpha-D-ribose 1-diphosphate: step 1/9. Functionally, catalyzes the condensation of ATP and 5-phosphoribose 1-diphosphate to form N'-(5'-phosphoribosyl)-ATP (PR-ATP). Has a crucial role in the pathway because the rate of histidine biosynthesis seems to be controlled primarily by regulation of HisG enzymatic activity. This Pseudomonas entomophila (strain L48) protein is ATP phosphoribosyltransferase.